The following is a 186-amino-acid chain: dTTP/UTP pyrophosphatase (186 aa).

Aspartate 66 acts as the Proton acceptor in catalysis.

Belongs to the Maf family. YhdE subfamily. A divalent metal cation serves as cofactor.

The protein resides in the cytoplasm. It catalyses the reaction dTTP + H2O = dTMP + diphosphate + H(+). The catalysed reaction is UTP + H2O = UMP + diphosphate + H(+). Nucleoside triphosphate pyrophosphatase that hydrolyzes dTTP and UTP. May have a dual role in cell division arrest and in preventing the incorporation of modified nucleotides into cellular nucleic acids. The sequence is that of dTTP/UTP pyrophosphatase from Pyrococcus horikoshii (strain ATCC 700860 / DSM 12428 / JCM 9974 / NBRC 100139 / OT-3).